The sequence spans 956 residues: Thrombospondin-3 (956 aa).

A signal peptide spans 1-21 (MEKPELWGVLALLLLCSYTCG). Residues 22–193 (SQDLQVIDLL…VESMKIILGG (172 aa)) enclose the Laminin G-like domain. 21 cysteine pairs are disulfide-bonded: cysteine 278–cysteine 289, cysteine 283–cysteine 300, cysteine 303–cysteine 314, cysteine 320–cysteine 332, cysteine 326–cysteine 341, cysteine 344–cysteine 368, cysteine 374–cysteine 388, cysteine 382–cysteine 397, cysteine 400–cysteine 412, cysteine 418–cysteine 432, cysteine 426–cysteine 442, cysteine 444–cysteine 455, cysteine 471–cysteine 478, cysteine 483–cysteine 503, cysteine 519–cysteine 539, cysteine 542–cysteine 562, cysteine 578–cysteine 598, cysteine 601–cysteine 621, cysteine 639–cysteine 659, cysteine 679–cysteine 699, and cysteine 715–cysteine 936. An N-linked (GlcNAc...) asparagine glycan is attached at asparagine 310. An EGF-like 1; calcium-binding domain is found at 316–354 (DINECAHADPCFPGSSCINTMPGFHCEACPPGYKGTRVS). An EGF-like 2; calcium-binding domain is found at 370-410 (DIDECNDGNNGGCDPNSICTNTVGSFKCGPCRLGFLGNQSQ). Residue asparagine 407 is glycosylated (N-linked (GlcNAc...) asparagine). Residues 414–456 (PARTCHSPAHSPCHIHAHCLFERNGAVSCQCNVGWAGNGNVCG) form the EGF-like 3 domain. TSP type-3 repeat units lie at residues 457–491 (PDTD…NSGQ), 492–527 (EDAD…NKDQ), 528–550 (QNSD…NNDQ), 551–586 (KDTD…NPLQ), 587–609 (TDRD…NPTQ), 610–647 (TDAD…NSSQ), 648–687 (LDSD…NPNQ), and 688–723 (KDSD…EVTL). 2 disordered regions span residues 518–537 (NCRL…SFGD) and 546–699 (PNND…GDVC). A compositionally biased stretch (acidic residues) spans 555-568 (GNGEGDACDNDVDG). Acidic residues predominate over residues 612–628 (ADSDLVGDVCDTNEDSD). N-linked (GlcNAc...) asparagine glycosylation occurs at asparagine 644. The span at 650-667 (SDNDGLGDECDGDDDNDG) shows a compositional bias: acidic residues. Positions 727–941 (RAYQTVILDP…LQYRCNDTVP (215 aa)) constitute a TSP C-terminal domain. N-linked (GlcNAc...) asparagine glycosylation occurs at asparagine 937.

It belongs to the thrombospondin family. In terms of assembly, oligomer; disulfide-linked. Brain, lung and cartilage.

Its function is as follows. Adhesive glycoprotein that mediates cell-to-cell and cell-to-matrix interactions. Can bind to fibrinogen, fibronectin, laminin and type V collagen. The sequence is that of Thrombospondin-3 (Thbs3) from Mus musculus (Mouse).